Reading from the N-terminus, the 117-residue chain is V-type sodium ATPase subunit F (117 aa).

A disordered region spans residues 1–20 (MARILTRIKEAEENNQKKEE). Over residues 7-20 (RIKEAEENNQKKEE) the composition is skewed to basic and acidic residues.

It belongs to the V-ATPase G subunit family.

Involved in ATP-driven sodium extrusion. The sequence is that of V-type sodium ATPase subunit F (ntpF) from Enterococcus hirae (strain ATCC 9790 / DSM 20160 / JCM 8729 / LMG 6399 / NBRC 3181 / NCIMB 6459 / NCDO 1258 / NCTC 12367 / WDCM 00089 / R).